The following is a 277-amino-acid chain: Alternative cytochrome c oxidase subunit 2 (277 aa).

Residues 1–40 (MAVALILLLIAIGSVLFHLFSPWWWTPIATNWGYIDDTIN) lie on the Periplasmic side of the membrane. A helical transmembrane segment spans residues 41 to 61 (ITFWITGFVFTAVILFMAYCV). The Cytoplasmic portion of the chain corresponds to 62–83 (FRFHHKEGRQAAYNPENKKLEW). A helical transmembrane segment spans residues 84 to 104 (WLSVGTGVGVAAMLAPGLVVW). Residues 105–277 (HQFVTVPADA…VRAKYNSGDD (173 aa)) lie on the Periplasmic side of the membrane. H190, C225, C229, and H233 together coordinate Cu cation.

The protein belongs to the cytochrome c oxidase subunit 2 family.

It localises to the cell membrane. It catalyses the reaction 4 Fe(II)-[cytochrome c] + O2 + 8 H(+)(in) = 4 Fe(III)-[cytochrome c] + 2 H2O + 4 H(+)(out). Cytochrome c oxidase is the component of the respiratory chain that catalyzes the reduction of oxygen to water. Subunits 1-3 form the functional core of the enzyme complex. Subunit 2 transfers the electrons from cytochrome c via its binuclear copper A center to the bimetallic center of the catalytic subunit 1. In Bradyrhizobium diazoefficiens (strain JCM 10833 / BCRC 13528 / IAM 13628 / NBRC 14792 / USDA 110), this protein is Alternative cytochrome c oxidase subunit 2 (coxM).